Here is a 99-residue protein sequence, read N- to C-terminus: Malonate decarboxylase acyl carrier protein (99 aa).

Ser25 carries the O-(phosphoribosyl dephospho-coenzyme A)serine modification.

Covalently binds the prosthetic group of malonate decarboxylase.

The protein localises to the cytoplasm. In terms of biological role, subunit of malonate decarboxylase, it is an acyl carrier protein to which acetyl and malonyl thioester residues are bound via a 2'-(5''-phosphoribosyl)-3'-dephospho-CoA prosthetic group and turn over during the catalytic mechanism. The chain is Malonate decarboxylase acyl carrier protein (mdcC) from Klebsiella pneumoniae.